Here is a 481-residue protein sequence, read N- to C-terminus: MFS transporter eqxG (481 aa).

Over residues 1–13 (MATTDPAIAAPDD) the composition is skewed to low complexity. Residues 1-58 (MATTDPAIAAPDDSQLEAGRENIRANVGDALEKPSSSTGTMVDEPTDPNVVDWDGPHD) are disordered. Asn64 carries an N-linked (GlcNAc...) asparagine glycan. Residues 72–92 (LHLVIVSLFTLAANLAATMFA) form a helical membrane-spanning segment. N-linked (GlcNAc...) asparagine glycosylation occurs at Asn106. Helical transmembrane passes span 111–131 (AMTV…LAPL), 146–166 (FVYV…MFLV), 169–189 (IICG…VADL), 201–221 (LFTV…TVIF), 276–296 (PIVL…FLLF), 315–335 (GLAY…FSVL), 353–373 (LILM…YGWT), 380–400 (WIVP…VVIP), 403–423 (IYLV…ANLL), and 439–459 (LYVS…CLLF).

Belongs to the major facilitator superfamily.

The protein resides in the cell membrane. Efflux pump that might be required for efficient secretion of equisetin or other secondary metabolies produced by the equisetin gene cluster. The sequence is that of MFS transporter eqxG from Fusarium heterosporum.